Reading from the N-terminus, the 561-residue chain is Arginine--tRNA ligase (561 aa).

Residues 108–118 (PNVAKEMHVGH) carry the 'HIGH' region motif.

Belongs to the class-I aminoacyl-tRNA synthetase family. Monomer.

It is found in the cytoplasm. The catalysed reaction is tRNA(Arg) + L-arginine + ATP = L-arginyl-tRNA(Arg) + AMP + diphosphate. This chain is Arginine--tRNA ligase, found in Haemophilus ducreyi (strain 35000HP / ATCC 700724).